A 417-amino-acid chain; its full sequence is Queuine tRNA-ribosyltransferase accessory subunit 2 (417 aa).

Residues Cys-324, Cys-326, Cys-329, and His-355 each coordinate Zn(2+).

It belongs to the queuine tRNA-ribosyltransferase family. QTRT2 subfamily. Heterodimer of a catalytic subunit and an accessory subunit. The cofactor is Zn(2+).

Its subcellular location is the cytoplasm. Functionally, non-catalytic subunit of the queuine tRNA-ribosyltransferase (TGT) that catalyzes the base-exchange of a guanine (G) residue with queuine (Q) at position 34 (anticodon wobble position) in tRNAs with GU(N) anticodons (tRNA-Asp, -Asn, -His and -Tyr), resulting in the hypermodified nucleoside queuosine (7-(((4,5-cis-dihydroxy-2-cyclopenten-1-yl)amino)methyl)-7-deazaguanosine). This Drosophila pseudoobscura pseudoobscura (Fruit fly) protein is Queuine tRNA-ribosyltransferase accessory subunit 2.